The following is a 155-amino-acid chain: Small ribosomal subunit protein uS7 (155 aa).

It belongs to the universal ribosomal protein uS7 family. In terms of assembly, part of the 30S ribosomal subunit. Contacts proteins S9 and S11.

One of the primary rRNA binding proteins, it binds directly to 16S rRNA where it nucleates assembly of the head domain of the 30S subunit. Is located at the subunit interface close to the decoding center, probably blocks exit of the E-site tRNA. The polypeptide is Small ribosomal subunit protein uS7 (Halorhodospira halophila (strain DSM 244 / SL1) (Ectothiorhodospira halophila (strain DSM 244 / SL1))).